A 332-amino-acid polypeptide reads, in one-letter code: Small ribosomal subunit protein uS2 (332 aa).

The protein belongs to the universal ribosomal protein uS2 family.

This is Small ribosomal subunit protein uS2 from Nitrobacter hamburgensis (strain DSM 10229 / NCIMB 13809 / X14).